Reading from the N-terminus, the 312-residue chain is Taste receptor type 2 member 9 (312 aa).

Topologically, residues 1–9 (MPSAIEAIY) are extracellular. Residues 10–32 (IILIAGELTIGIWGNGFIVLVNC) traverse the membrane as a helical segment. Topologically, residues 33–52 (IDWLKRRDVSLIDIILISLA) are cytoplasmic. A helical membrane pass occupies residues 53–72 (ISRICLLXVISLDGFFMLLF). Residues 73–86 (PTTYGNSVLVSIVB) lie on the Extracellular side of the membrane. A helical transmembrane segment spans residues 87–109 (IVWTFANNSSLWFTSCLSIFYLL). Residues 110-128 (KIANISHPFFFWLKLKINK) are Cytoplasmic-facing. Residues 129-146 (VILAILLGSFLISLVISV) form a helical membrane-spanning segment. Residues 147–180 (XMNDDMWYHLFKVSHEENITWEFKVSKIPGTFKQ) are Extracellular-facing. The N-linked (GlcNAc...) asparagine glycan is linked to asparagine 164. Residues 181–203 (LTLNLGAMVPFILCLISFSLLLF) traverse the membrane as a helical segment. At 204–234 (SLVRHTKQIQLXATGFRDPSTEAHMRAIKAV) the chain is on the cytoplasmic side. A helical membrane pass occupies residues 235–257 (IIFLLLLIVYYPVFLVMTSSALI). The Extracellular segment spans residues 258–261 (PQGK). Residues 262-284 (LVLMIGDIVTITFPSSHSFILIM) traverse the membrane as a helical segment. Topologically, residues 285–312 (GNSKLREAFLKMLRFVKRFLRRRKPFVP) are cytoplasmic.

The protein belongs to the G-protein coupled receptor T2R family.

The protein localises to the membrane. Functionally, gustducin-coupled receptor implicated in the perception of bitter compounds in the oral cavity and the gastrointestinal tract. Signals through PLCB2 and the calcium-regulated cation channel TRPM5. The sequence is that of Taste receptor type 2 member 9 (TAS2R9) from Pongo pygmaeus (Bornean orangutan).